Reading from the N-terminus, the 323-residue chain is Beta-ketoacyl-[acyl-carrier-protein] synthase III (323 aa).

Active-site residues include C114 and H250. The segment at 251–255 is ACP-binding; that stretch reads QANLR. The active site involves N280.

Belongs to the thiolase-like superfamily. FabH family. In terms of assembly, homodimer.

It is found in the cytoplasm. It catalyses the reaction malonyl-[ACP] + acetyl-CoA + H(+) = 3-oxobutanoyl-[ACP] + CO2 + CoA. The protein operates within lipid metabolism; fatty acid biosynthesis. Functionally, catalyzes the condensation reaction of fatty acid synthesis by the addition to an acyl acceptor of two carbons from malonyl-ACP. Catalyzes the first condensation reaction which initiates fatty acid synthesis and may therefore play a role in governing the total rate of fatty acid production. Possesses both acetoacetyl-ACP synthase and acetyl transacylase activities. Its substrate specificity determines the biosynthesis of branched-chain and/or straight-chain of fatty acids. The sequence is that of Beta-ketoacyl-[acyl-carrier-protein] synthase III from Cereibacter sphaeroides (strain ATCC 17025 / ATH 2.4.3) (Rhodobacter sphaeroides).